The primary structure comprises 447 residues: DNA primase DnaG (447 aa).

Residues 200–274 enclose the Toprim domain; the sequence is DSIIVVEGRA…DIDYVARAPE (75 aa). Mg(2+) is bound by residues E206, D248, and D250.

It belongs to the archaeal DnaG primase family. In terms of assembly, forms a ternary complex with MCM helicase and DNA. Component of the archaeal exosome complex. Requires Mg(2+) as cofactor.

The catalysed reaction is ssDNA + n NTP = ssDNA/pppN(pN)n-1 hybrid + (n-1) diphosphate.. Functionally, RNA polymerase that catalyzes the synthesis of short RNA molecules used as primers for DNA polymerase during DNA replication. Also part of the exosome, which is a complex involved in RNA degradation. Acts as a poly(A)-binding protein that enhances the interaction between heteromeric, adenine-rich transcripts and the exosome. The sequence is that of DNA primase DnaG from Pyrococcus abyssi (strain GE5 / Orsay).